The chain runs to 137 residues: 5-hydroxytryptamine receptor 4 (137 aa).

A helical transmembrane segment spans residues 12-35; sequence TPLRVAVLLAGCWAIPVLISFLPI. N-linked (GlcNAc...) asparagine glycosylation occurs at N58. A helical membrane pass occupies residues 67-90; the sequence is NKPYAITCSVVAFYIPFLLMVLAY. The disordered stretch occupies residues 112 to 137; that stretch reads APAEGRPPSADQHSTHRMRTETKAAK.

Belongs to the G-protein coupled receptor 1 family. In terms of assembly, interacts (via C-terminus 330-346 AA) with GRK5; this interaction is promoted by 5-HT (serotonin).

Its subcellular location is the cell membrane. The protein resides in the endosome membrane. Functionally, G-protein coupled receptor for 5-hydroxytryptamine (serotonin), a biogenic hormone that functions as a neurotransmitter, a hormone and a mitogen. Ligand binding causes a conformation change that triggers signaling via guanine nucleotide-binding proteins (G proteins) and modulates the activity of downstream effectors. HTR4 is coupled to G(s) G alpha proteins and mediates activation of adenylate cyclase activity. The chain is 5-hydroxytryptamine receptor 4 (HTR4) from Sus scrofa (Pig).